A 154-amino-acid polypeptide reads, in one-letter code: Myoglobin (154 aa).

In terms of domain architecture, Globin spans 2–148 (GLSDGEWQLV…FRNDIAAKYK (147 aa)). Ser4 is modified (phosphoserine). Residue His65 participates in nitrite binding. Position 65 (His65) interacts with O2. At Thr68 the chain carries Phosphothreonine. His94 provides a ligand contact to heme b.

Belongs to the globin family. In terms of assembly, monomeric.

The protein localises to the cytoplasm. The protein resides in the sarcoplasm. It carries out the reaction Fe(III)-heme b-[protein] + nitric oxide + H2O = Fe(II)-heme b-[protein] + nitrite + 2 H(+). It catalyses the reaction H2O2 + AH2 = A + 2 H2O. In terms of biological role, monomeric heme protein which primary function is to store oxygen and facilitate its diffusion within muscle tissues. Reversibly binds oxygen through a pentacoordinated heme iron and enables its timely and efficient release as needed during periods of heightened demand. Depending on the oxidative conditions of tissues and cells, and in addition to its ability to bind oxygen, it also has a nitrite reductase activity whereby it regulates the production of bioactive nitric oxide. Under stress conditions, like hypoxia and anoxia, it also protects cells against reactive oxygen species thanks to its pseudoperoxidase activity. The sequence is that of Myoglobin (MB) from Ctenodactylus gundi (Northern gundi).